Here is a 103-residue protein sequence, read N- to C-terminus: Iron-sulfur cluster assembly protein CyaY (103 aa).

The protein belongs to the frataxin family.

Involved in iron-sulfur (Fe-S) cluster assembly. May act as a regulator of Fe-S biogenesis. In Rickettsia peacockii (strain Rustic), this protein is Iron-sulfur cluster assembly protein CyaY.